The primary structure comprises 309 residues: SIPTDATLDLDEQISQLMQCKPLSEQQVRALCEKAKEILMDESNVQPVKSPVTICGDIHGQFHDLAELFRIGGMCPDTNYLFMGDYVDRGYYSVETVTLLVGLKVRYPQRITILRGNHESRQITQVYGFYDECLRKYGNANVWKYFTDLFDYLPLTALVESEIFCLHGGLSPSIETLDNIRNFDRVQEVPHGGPMCDLLWSDPDDRCGWGISPRGAGYTFGQDISNQFNHSNSLKLISRAHQLVMDGYNWAHEAKGGTIFSAPNYCYRCGNMASILEVDDCRNHTFIQFEPAPRRGEPDVTRRTPDYFL.

Aspartate 57, histidine 59, aspartate 85, and asparagine 117 together coordinate Mn(2+). Catalysis depends on histidine 118, which acts as the Proton donor. Mn(2+)-binding residues include histidine 167 and histidine 241.

The protein belongs to the PPP phosphatase family. PP-2A subfamily. Mn(2+) is required as a cofactor.

It catalyses the reaction O-phospho-L-seryl-[protein] + H2O = L-seryl-[protein] + phosphate. The enzyme catalyses O-phospho-L-threonyl-[protein] + H2O = L-threonyl-[protein] + phosphate. This chain is Serine/threonine-protein phosphatase PP2A catalytic subunit, found in Brassica napus (Rape).